The following is a 302-amino-acid chain: tRNA pseudouridine synthase B (302 aa).

Asp43 acts as the Nucleophile in catalysis.

Belongs to the pseudouridine synthase TruB family. Type 1 subfamily.

The enzyme catalyses uridine(55) in tRNA = pseudouridine(55) in tRNA. Responsible for synthesis of pseudouridine from uracil-55 in the psi GC loop of transfer RNAs. The sequence is that of tRNA pseudouridine synthase B from Burkholderia pseudomallei (strain 668).